We begin with the raw amino-acid sequence, 108 residues long: Small ribosomal subunit protein bS6 (108 aa).

The protein belongs to the bacterial ribosomal protein bS6 family.

In terms of biological role, binds together with bS18 to 16S ribosomal RNA. The chain is Small ribosomal subunit protein bS6 from Trichormus variabilis (strain ATCC 29413 / PCC 7937) (Anabaena variabilis).